We begin with the raw amino-acid sequence, 318 residues long: Phospho-N-acetylmuramoyl-pentapeptide-transferase (318 aa).

The next 10 membrane-spanning stretches (helical) occupy residues 5 to 25 (LKPLVLAAVVTLILGPPVLAF), 50 to 70 (PTMGGVLFLIGLTVSTLVLAP), 71 to 91 (PSPLTLSTLILTWGYALIGLV), 115 to 135 (VLLGLVAGVAAMLWLGRGSVI), 139 to 159 (VTGWHWDLGWYYPLLAALLLV), 173 to 193 (GLAAGITLWVALAYGILALTL), 198 to 218 (LVTFAMALAGGCLGFLVYNFH), 222 to 242 (VFMGDTGSLALGAAIGFLAIM), 248 to 268 (VLPVLGGVYVLETLSVILQVV), and 298 to 318 (VLFFWALAIIMALAGLYLLTI).

Belongs to the glycosyltransferase 4 family. MraY subfamily. Mg(2+) is required as a cofactor.

The protein localises to the cell membrane. The catalysed reaction is UDP-N-acetyl-alpha-D-muramoyl-L-alanyl-gamma-D-glutamyl-meso-2,6-diaminopimeloyl-D-alanyl-D-alanine + di-trans,octa-cis-undecaprenyl phosphate = di-trans,octa-cis-undecaprenyl diphospho-N-acetyl-alpha-D-muramoyl-L-alanyl-D-glutamyl-meso-2,6-diaminopimeloyl-D-alanyl-D-alanine + UMP. It participates in cell wall biogenesis; peptidoglycan biosynthesis. In terms of biological role, catalyzes the initial step of the lipid cycle reactions in the biosynthesis of the cell wall peptidoglycan: transfers peptidoglycan precursor phospho-MurNAc-pentapeptide from UDP-MurNAc-pentapeptide onto the lipid carrier undecaprenyl phosphate, yielding undecaprenyl-pyrophosphoryl-MurNAc-pentapeptide, known as lipid I. This Moorella thermoacetica (strain ATCC 39073 / JCM 9320) protein is Phospho-N-acetylmuramoyl-pentapeptide-transferase.